The chain runs to 354 residues: Probable L-ascorbate-6-phosphate lactonase UlaG (354 aa).

The protein belongs to the UlaG family. A divalent metal cation is required as a cofactor.

Its subcellular location is the cytoplasm. It carries out the reaction L-ascorbate 6-phosphate + H2O = 3-dehydro-L-gulonate 6-phosphate. The protein operates within cofactor degradation; L-ascorbate degradation; D-xylulose 5-phosphate from L-ascorbate: step 1/4. In terms of biological role, probably catalyzes the hydrolysis of L-ascorbate-6-P into 3-keto-L-gulonate-6-P. Is essential for L-ascorbate utilization under anaerobic conditions. The polypeptide is Probable L-ascorbate-6-phosphate lactonase UlaG (Shigella boydii serotype 4 (strain Sb227)).